Consider the following 251-residue polypeptide: 4-hydroxy-tetrahydrodipicolinate reductase (251 aa).

An NAD(+)-binding site is contributed by Gly-8 to Met-13. Arg-36 provides a ligand contact to NADP(+). NAD(+) is bound by residues Gly-89–Thr-91 and Thr-113–Phe-116. His-145 serves as the catalytic Proton donor/acceptor. His-146 serves as a coordination point for (S)-2,3,4,5-tetrahydrodipicolinate. The Proton donor role is filled by Lys-149. A (S)-2,3,4,5-tetrahydrodipicolinate-binding site is contributed by Gly-155–Thr-156.

This sequence belongs to the DapB family.

Its subcellular location is the cytoplasm. The enzyme catalyses (S)-2,3,4,5-tetrahydrodipicolinate + NAD(+) + H2O = (2S,4S)-4-hydroxy-2,3,4,5-tetrahydrodipicolinate + NADH + H(+). The catalysed reaction is (S)-2,3,4,5-tetrahydrodipicolinate + NADP(+) + H2O = (2S,4S)-4-hydroxy-2,3,4,5-tetrahydrodipicolinate + NADPH + H(+). Its pathway is amino-acid biosynthesis; L-lysine biosynthesis via DAP pathway; (S)-tetrahydrodipicolinate from L-aspartate: step 4/4. In terms of biological role, catalyzes the conversion of 4-hydroxy-tetrahydrodipicolinate (HTPA) to tetrahydrodipicolinate. In Methanocorpusculum labreanum (strain ATCC 43576 / DSM 4855 / Z), this protein is 4-hydroxy-tetrahydrodipicolinate reductase.